A 709-amino-acid chain; its full sequence is Homeobox-leucine zipper protein TF1 (709 aa).

The homeobox DNA-binding region spans 66–125; the sequence is RKRRLQRLTGKQSEVLEGFFSICGHPDDGQKRHLSETTGLGLDQVKFWFQNKRTQVKTMC. A coiled-coil region spans residues 166-187; that stretch reads NQLAVEMERLMGQSEWLQQEIA. Residues 212-441 enclose the START domain; that stretch reads GQHDQQMIAE…MARQSARMRD (230 aa).

This sequence belongs to the HD-ZIP homeobox family. Class IV subfamily.

It is found in the nucleus. Probable transcription factor. The protein is Homeobox-leucine zipper protein TF1 (TF1) of Oryza sativa subsp. japonica (Rice).